Reading from the N-terminus, the 394-residue chain is Protein-glutamate methylesterase/protein-glutamine glutaminase (394 aa).

The tract at residues 1–24 (MSDGFGRPPPPAPAGHPTGAAGGD) is disordered. Low complexity predominate over residues 15-24 (GHPTGAAGGD). In terms of domain architecture, Response regulatory spans 27 to 145 (RVMVVDDSAV…EIGGADAFKR (119 aa)). A 4-aspartylphosphate modification is found at D78. The CheB-type methylesterase domain occupies 191 to 393 (PAPAVGSVGQ…PYIRKFASRA (203 aa)). Catalysis depends on residues S211, H238, and D335.

The protein belongs to the CheB family. Post-translationally, phosphorylated by CheA. Phosphorylation of the N-terminal regulatory domain activates the methylesterase activity.

The protein localises to the cytoplasm. The catalysed reaction is [protein]-L-glutamate 5-O-methyl ester + H2O = L-glutamyl-[protein] + methanol + H(+). It carries out the reaction L-glutaminyl-[protein] + H2O = L-glutamyl-[protein] + NH4(+). Its function is as follows. Involved in chemotaxis. Part of a chemotaxis signal transduction system that modulates chemotaxis in response to various stimuli. Catalyzes the demethylation of specific methylglutamate residues introduced into the chemoreceptors (methyl-accepting chemotaxis proteins or MCP) by CheR. Also mediates the irreversible deamidation of specific glutamine residues to glutamic acid. This Azospirillum brasilense protein is Protein-glutamate methylesterase/protein-glutamine glutaminase.